We begin with the raw amino-acid sequence, 456 residues long: Iroquois-class homeodomain protein irx-2 (456 aa).

The segment at residues 110–172 (DPAYRKNATR…NARRRLKKEN (63 aa)) is a DNA-binding region (homeobox; TALE-type). Disordered stretches follow at residues 172-214 (NKMT…AEDE), 246-320 (CESG…PASK), and 434-456 (RPTN…QPYP). Composition is skewed to basic and acidic residues over residues 192–205 (GERV…KAQD) and 246–256 (CESGSESKEKY). Positions 257-269 (DDDEDEEEGDEED) are enriched in acidic residues. Residues 291-318 (NHQQDGSPRNSNKTSLDNGMSPSSQTPA) show a composition bias toward polar residues.

The protein belongs to the TALE/IRO homeobox family. In terms of tissue distribution, expressed in the neural plate in overlapping patterns with other irx members, which all share an anterior border of expression. Also expressed in the placodes. Broadly expressed in the tailbud rhombencephalon (hindbrain). Outside the nervous system and at tailbud stages, expressed in the developing otic vesicle, branchial arches, prospective heart region and pronephros.

The protein localises to the nucleus. In terms of biological role, acts partially redundantly with other irx members in neural patterning. Required for formation of the posterior forebrain, midbrain, hindbrain, and to a lesser extent, spinal cord. Acts early in neural plate development to induce expression of some but not all proneural genes, and specify a neural precursor state. Also up-regulates repressors that prevent neuronal differentiation. Patterns the neuroectoderm in both the anterior/posterior and dorsal/ventral axes. Probably dispensable for pronephric kidney development. This is Iroquois-class homeodomain protein irx-2 from Xenopus tropicalis (Western clawed frog).